Reading from the N-terminus, the 1662-residue chain is Putative mediator of RNA polymerase II transcription subunit 23 (1662 aa).

Disordered regions lie at residues 1-24 (MYTN…PQQQ), 95-139 (QQRP…QSQP), 206-252 (TTTP…STTN), and 1530-1572 (GYDD…QDTN). Residues 39-122 (QQQNIQQQQQ…QQSQQQQASL (84 aa)) adopt a coiled-coil conformation. Residues 95 to 124 (QQRPQTPQQNAQQQSQQSQQSQQQQASLGQ) are compositionally biased toward low complexity. Residues 1532 to 1560 (DDDDDDEDDDYYDEDDEDEDDDNEDDQQD) show a composition bias toward acidic residues.

The protein belongs to the Mediator complex subunit 23 family. As to quaternary structure, component of the Mediator complex.

The protein resides in the nucleus. Component of the Mediator complex, a coactivator involved in the regulated transcription of nearly all RNA polymerase II-dependent genes. Mediator functions as a bridge to convey information from gene-specific regulatory proteins to the basal RNA polymerase II transcription machinery. Mediator is recruited to promoters by direct interactions with regulatory proteins and serves as a scaffold for the assembly of a functional preinitiation complex with RNA polymerase II and the general transcription factors. The chain is Putative mediator of RNA polymerase II transcription subunit 23 (med23) from Dictyostelium discoideum (Social amoeba).